We begin with the raw amino-acid sequence, 1221 residues long: 2-oxoglutarate dehydrogenase E1/E2 component (1221 aa).

The tract at residues Ser-2 to Gly-40 is 2-oxoglutarate dehydrogenase E1, N-terminal part. A disordered region spans residues Gln-22–Ile-107. Over residues Lys-23–Phe-36 the composition is skewed to basic and acidic residues. The span at Gly-41 to Gln-52 shows a compositional bias: polar residues. Positions Gly-41 to Lys-89 are linker. Residues Pro-53 to Ala-73 show a composition bias toward low complexity. Positions Pro-74–Glu-90 are enriched in basic and acidic residues. The succinyltransferase E2 stretch occupies residues Glu-90–Asp-337. Residue His-316 is the Proton acceptor; for succinyltransferase activity of the active site. The tract at residues Asp-338–Ala-1221 is 2-oxoglutarate dehydrogenase E1, C-terminal part. A thiamine diphosphate-binding site is contributed by Arg-544. Residues His-583 and Ser-608 each contribute to the 2-oxoglutarate site. Residues Ser-608, Leu-610, Asp-645, Ala-646, Ala-647, and Asn-678 each coordinate thiamine diphosphate. Asp-645 is a Mg(2+) binding site. The Mg(2+) site is built by Asn-678 and Ile-680. His-1017 is a 2-oxoglutarate binding site. Acetyl-CoA is bound by residues Thr-1035, Arg-1051, Lys-1087, Ser-1090, and Arg-1144.

The protein in the N-terminal section; belongs to the alpha-ketoglutarate dehydrogenase family. In the C-terminal section; belongs to the 2-oxoacid dehydrogenase family. In terms of assembly, homodimer. Part of an unusual ODH/PDH supercomplex, consisting of AceE (E1), AceF (E2), and Lpd (E3) together with OdhA (E1+E2). Interacts with the FHA domain of unphosphorylated OdhI via its C-terminal dehydrogenase domain. Mg(2+) is required as a cofactor. It depends on thiamine diphosphate as a cofactor.

It carries out the reaction N(6)-[(R)-lipoyl]-L-lysyl-[protein] + 2-oxoglutarate + H(+) = N(6)-[(R)-S(8)-succinyldihydrolipoyl]-L-lysyl-[protein] + CO2. The catalysed reaction is N(6)-[(R)-dihydrolipoyl]-L-lysyl-[protein] + succinyl-CoA = N(6)-[(R)-S(8)-succinyldihydrolipoyl]-L-lysyl-[protein] + CoA. It functions in the pathway carbohydrate metabolism; tricarboxylic acid cycle; succinyl-CoA from 2-oxoglutarate (dehydrogenase route): step 1/1. Its activity is regulated as follows. Inhibited by unphosphorylated OdhI, but not by phosphorylated OdhI. Functionally, catalyzes the E1 and E2 reactions as part of 2-oxoglutarate dehydrogenase (ODH) activity, to convert 2-oxoglutarate to succinyl-CoA and CO(2). OdhA has reductase activity with 2-oxoglutarate but does not react with pyruvate, and also displays transsuccinylase but no transacetylase activity. Since OdhA is not lipoylated, the succinyltransferase activity of its E2 domain is dependent on lipoyl residues of the acetyltransferase AceF. In Corynebacterium glutamicum (strain ATCC 13032 / DSM 20300 / JCM 1318 / BCRC 11384 / CCUG 27702 / LMG 3730 / NBRC 12168 / NCIMB 10025 / NRRL B-2784 / 534), this protein is 2-oxoglutarate dehydrogenase E1/E2 component.